A 375-amino-acid chain; its full sequence is N5-carboxyaminoimidazole ribonucleotide synthase (375 aa).

ATP is bound by residues Arg108, Lys148, 153–159 (GYDGKGQ), 183–186 (EQYL), Glu191, His214, and 268–269 (NE). Residues 112 to 298 (KQTLQDSGSN…QFDTHIKAIT (187 aa)) form the ATP-grasp domain.

The protein belongs to the PurK/PurT family. As to quaternary structure, homodimer.

The enzyme catalyses 5-amino-1-(5-phospho-beta-D-ribosyl)imidazole + hydrogencarbonate + ATP = 5-carboxyamino-1-(5-phospho-D-ribosyl)imidazole + ADP + phosphate + 2 H(+). The protein operates within purine metabolism; IMP biosynthesis via de novo pathway; 5-amino-1-(5-phospho-D-ribosyl)imidazole-4-carboxylate from 5-amino-1-(5-phospho-D-ribosyl)imidazole (N5-CAIR route): step 1/2. In terms of biological role, catalyzes the ATP-dependent conversion of 5-aminoimidazole ribonucleotide (AIR) and HCO(3)(-) to N5-carboxyaminoimidazole ribonucleotide (N5-CAIR). The protein is N5-carboxyaminoimidazole ribonucleotide synthase of Staphylococcus saprophyticus subsp. saprophyticus (strain ATCC 15305 / DSM 20229 / NCIMB 8711 / NCTC 7292 / S-41).